The sequence spans 389 residues: Chalcone synthase 2 (389 aa).

55–62 (KFQRMCDK) is a CoA binding site. Catalysis depends on C164, which acts as the Acyl-thioester intermediate. Residues T197 and 216 to 217 (GD) contribute to the substrate site. Position 308 (A308) interacts with CoA.

Belongs to the thiolase-like superfamily. Chalcone/stilbene synthases family. Homodimer.

It catalyses the reaction (E)-4-coumaroyl-CoA + 3 malonyl-CoA + 3 H(+) = 2',4,4',6'-tetrahydroxychalcone + 3 CO2 + 4 CoA. It participates in secondary metabolite biosynthesis; flavonoid biosynthesis. In terms of biological role, the primary product of this enzyme is 4,2',4',6'-tetrahydroxychalcone (also termed naringenin-chalcone or chalcone) which can under specific conditions spontaneously isomerize into naringenin. In Medicago sativa (Alfalfa), this protein is Chalcone synthase 2 (CHS2).